We begin with the raw amino-acid sequence, 135 residues long: MSVSPVRCEPVVDVEEPVEAEVLVSSQRLSFLGGVDPKTGEVVDPSHELCGEKLTGRVLVLPGGRGSTVGSYVLMEMADRGTAPAGIVVREAEPILVVGCVLGDIPLFHRPERDLVEELSTGDVVKLLPGGKVEV.

The Proton acceptor role is filled by Ser-67.

This sequence belongs to the AcnX type II small subunit family. In terms of assembly, heterodimer composed of a large subunit (PMDh-L) and a small subunit (PMDh-S).

It catalyses the reaction (R)-5-phosphomevalonate = (2E)-3-methyl-5-phosphooxypent-2-enoate + H2O. Its pathway is isoprenoid biosynthesis; isopentenyl diphosphate biosynthesis via mevalonate pathway. Component of a hydro-lyase that catalyzes the dehydration of mevalonate 5-phosphate (MVA5P) to form trans-anhydromevalonate 5-phosphate (tAHMP). Involved in the archaeal mevalonate (MVA) pathway, which provides fundamental precursors for isoprenoid biosynthesis, such as isopentenyl diphosphate (IPP) and dimethylallyl diphosphate (DMAPP). The chain is Phosphomevalonate dehydratase small subunit from Methanopyrus kandleri (strain AV19 / DSM 6324 / JCM 9639 / NBRC 100938).